Consider the following 397-residue polypeptide: MGKEKFERKKPHVNIGTIGHIDHGKTTLTAAITKVAGLRGNGKFVAFDEIDKAPEEKERGITIATAHVEYETATRHYAHVDCPGHADYIKNMITGAAQMDGGILVVAATDGPMPQTREHILLARQVGVPYLVVFLNKCDMVDDEELLELVELEVRELLSLYGFPGDDIPVIRGSALKALETDDPNSADAAPVVALLDACDSYIPEPQRDIDKPFLMPIEDVFSISGRGTVVTGRVERGIIKVGEEVEIVGIKDTVKSTCTGVEMFRKLLDQGQAGDNIGALLRGIKREDVERGQVLAAPKSIKPHRKFKAEVYVLSKEEGGRHTPFFSGYRPQFYFRTTDITGIIALADGVEMVMPGDNSTFTVELIAPIAMEQGLRFAIREGGRTVGAGVVSEILE.

The tr-type G domain occupies lysine 10–glutamine 207. Residues glycine 19–threonine 26 form a G1 region. Glycine 19–threonine 26 is a binding site for GTP. Mg(2+) is bound at residue threonine 26. The segment at glycine 60 to alanine 64 is G2. Positions aspartate 81–glycine 84 are G3. GTP contacts are provided by residues aspartate 81–histidine 85 and asparagine 136–aspartate 139. The interval asparagine 136–aspartate 139 is G4. The segment at serine 174–leucine 176 is G5.

This sequence belongs to the TRAFAC class translation factor GTPase superfamily. Classic translation factor GTPase family. EF-Tu/EF-1A subfamily. As to quaternary structure, monomer.

The protein localises to the cytoplasm. The enzyme catalyses GTP + H2O = GDP + phosphate + H(+). Its function is as follows. GTP hydrolase that promotes the GTP-dependent binding of aminoacyl-tRNA to the A-site of ribosomes during protein biosynthesis. In Nitratidesulfovibrio vulgaris (strain DSM 19637 / Miyazaki F) (Desulfovibrio vulgaris), this protein is Elongation factor Tu.